The sequence spans 623 residues: UvrABC system protein C (623 aa).

Residues proline 12–isoleucine 91 form the GIY-YIG domain. Residues threonine 201 to threonine 236 form the UVR domain. The disordered stretch occupies residues arginine 603 to lysine 623.

It belongs to the UvrC family. As to quaternary structure, interacts with UvrB in an incision complex.

Its subcellular location is the cytoplasm. The UvrABC repair system catalyzes the recognition and processing of DNA lesions. UvrC both incises the 5' and 3' sides of the lesion. The N-terminal half is responsible for the 3' incision and the C-terminal half is responsible for the 5' incision. The chain is UvrABC system protein C from Citrifermentans bemidjiense (strain ATCC BAA-1014 / DSM 16622 / JCM 12645 / Bem) (Geobacter bemidjiensis).